The sequence spans 158 residues: Protein Smg homolog (158 aa).

The protein belongs to the Smg family.

This chain is Protein Smg homolog, found in Alteromonas mediterranea (strain DSM 17117 / CIP 110805 / LMG 28347 / Deep ecotype).